Reading from the N-terminus, the 552-residue chain is Hyaluronan synthase 2 (552 aa).

At 1 to 11 (MHCERFLCVLR) the chain is on the cytoplasmic side. The helical transmembrane segment at 12–32 (IIGTTLFGVSLLLGITAAYIV) threads the bilayer. Topologically, residues 33–45 (GYQFIQTDNYYFS) are extracellular. Residues 46–66 (FGLYGAFLASHLIIQSLFAFL) form a helical membrane-spanning segment. Residues 67–374 (EHRKMKKSLE…NAMWFHKHHL (308 aa)) lie on the Cytoplasmic side of the membrane. The residue at position 110 (Thr110) is a Phosphothreonine. Lys190 is covalently cross-linked (Glycyl lysine isopeptide (Lys-Gly) (interchain with G-Cter in ubiquitin)). Ser221 carries an O-linked (GlcNAc) serine glycan. Phosphothreonine is present on Thr328. Residues 375–395 (WMTYEAVITGFFPFFLIATVI) traverse the membrane as a helical segment. The Extracellular portion of the chain corresponds to 396 to 402 (QLFYRGK). A helical membrane pass occupies residues 403-423 (IWNILLFLLTVQLVGLIKSSF). The Cytoplasmic portion of the chain corresponds to 424 to 429 (ASCLRG). The chain crosses the membrane as a helical span at residues 430 to 450 (NIVMVFMSLYSVLYMSSLLPA). Residues 451–475 (KMFAIATINKAGWGTSGRKTIVVNF) are Extracellular-facing. The chain crosses the membrane as a helical span at residues 476–496 (IGLIPVSVWFTILLGGVIFTI). At 497–510 (YKESKKPFSESKQT) the chain is on the cytoplasmic side. Residues 511-531 (VLIVGTLIYACYWVVLLTLYV) form a helical membrane-spanning segment. Residues 532–552 (VLINKCGRRKKGQQYDMVLDV) lie on the Extracellular side of the membrane.

Belongs to the NodC/HAS family. Homodimer; dimerization promotes enzymatic activity. Forms heterodimer with HAS3. Forms heterodimer with HAS1. The cofactor is Mg(2+). Phosphorylation at Thr-328 is essential for hyaluronan synthase activity. Post-translationally, O-GlcNAcylation at Ser-221 increases the stability of HAS2 and plasma membrane localization. In terms of processing, ubiquitination at Lys-190; this ubiquitination is essential for hyaluronan synthase activity and homo- or hetero-oligomerization. Can also be poly-ubiquitinated. Deubiquitinated by USP17L22/USP17 and USP4. USP17L22/USP17 efficiently removes 'Lys-63'- and 'Lys-48'-linked polyubiquitin chains, whereas USP4 preferentially removes monoubiquitination and, partially, both 'Lys-63'- and 'Lys-48'-linked polyubiquitin chain.

Its subcellular location is the cell membrane. It localises to the endoplasmic reticulum membrane. It is found in the vesicle. The protein resides in the golgi apparatus membrane. The protein localises to the lysosome. The enzyme catalyses [hyaluronan](n) + UDP-N-acetyl-alpha-D-glucosamine = N-acetyl-beta-D-glucosaminyl-(1-&gt;4)-[hyaluronan](n) + UDP + H(+). It carries out the reaction N-acetyl-beta-D-glucosaminyl-(1-&gt;4)-[hyaluronan](n) + UDP-alpha-D-glucuronate = [hyaluronan](n+1) + UDP + H(+). The protein operates within glycan biosynthesis; hyaluronan biosynthesis. Functionally, catalyzes the addition of GlcNAc or GlcUA monosaccharides to the nascent hyaluronan polymer. Therefore, it is essential to hyaluronan synthesis a major component of most extracellular matrices that has a structural role in tissues architectures and regulates cell adhesion, migration and differentiation. This is one of three isoenzymes responsible for cellular hyaluronan synthesis and it is particularly responsible for the synthesis of high molecular mass hyaluronan. The chain is Hyaluronan synthase 2 (Has2) from Rattus norvegicus (Rat).